The primary structure comprises 208 residues: Small ribosomal subunit protein uS4 (208 aa).

The S4 RNA-binding domain occupies 98 to 163 (QRLDNVVYRM…NPQITRAIEL (66 aa)).

The protein belongs to the universal ribosomal protein uS4 family. As to quaternary structure, part of the 30S ribosomal subunit. Contacts protein S5. The interaction surface between S4 and S5 is involved in control of translational fidelity.

Functionally, one of the primary rRNA binding proteins, it binds directly to 16S rRNA where it nucleates assembly of the body of the 30S subunit. In terms of biological role, with S5 and S12 plays an important role in translational accuracy. This chain is Small ribosomal subunit protein uS4, found in Campylobacter jejuni (strain RM1221).